The following is a 396-amino-acid chain: MSLYGMMRTGVSGMNAQANRLSTVADNIANASTVGYKRAETQFSSLVLPSTAGQYNSGSVLTDVRYGISDQGGIRSTSSTTDLAIDGNGYFVVQGPGGSTYLTRAGSFVPDKNGDLVNSAGYYLLGAGADEAAGGLTVAGLNIVNVNAAALPAEGSTAGDFTVNLPSTDQAPAAGGYNHKTSLISYNDKGEKITLDVYFTKTGADEWNVSVKNAADGVEIGTTVLNFDPTTGDLVSGGNVAVNLGAYGGQTLNLNLGGSTQRAGDYTISQAVINGQAPSSIKGVDVGNDGAVVAVYENGTQKVLYRIPLANVASPDRMTVVSGNIFLPSAESGDVRLGFPQGDGMGKIMSGTLEESNADIAQELTDMIEAQRSYTANSKVFQTGFELMDVLVNLKR.

Belongs to the flagella basal body rod proteins family.

The protein localises to the bacterial flagellum basal body. The flagellum is required to cause a persistent disease in a murine model of infection. The protein is Flagellar hook protein FlgE (flgE) of Brucella melitensis biotype 1 (strain ATCC 23456 / CCUG 17765 / NCTC 10094 / 16M).